The sequence spans 164 residues: Putative glutamine amidotransferase-like protein RP713 (164 aa).

Residues threonine 39 to methionine 164 enclose the Glutamine amidotransferase type-1 domain.

This is Putative glutamine amidotransferase-like protein RP713 from Rickettsia prowazekii (strain Madrid E).